The chain runs to 87 residues: Putative RNase MJ1548 (87 aa).

Active-site residues include Arg65 and His70. The short motif at 65–72 (RNAIVHKY) is the RX(4)HXY motif element. Residue Tyr72 is modified to O-di-AMP-tyrosine.

This sequence belongs to the HepT RNase toxin family. In terms of assembly, homodimer, probably forms a complex with cognate antitoxin MJ1547. In terms of processing, modified by cognate antitoxin MJ1547; probably at least 2 successive AMPylation events occur on Tyr-72.

Probable toxic component of a putative type VII toxin-antitoxin (TA) system, probably an RNase. Probably neutralized by cognate antitoxin MJ1547. Neutralization may be due to AMPylation by antitoxin MJ1547. The chain is Putative RNase MJ1548 from Methanocaldococcus jannaschii (strain ATCC 43067 / DSM 2661 / JAL-1 / JCM 10045 / NBRC 100440) (Methanococcus jannaschii).